Consider the following 604-residue polypeptide: Threonine--tRNA ligase (604 aa).

Positions aspartate 209–proline 500 are catalytic. The Zn(2+) site is built by cysteine 301, histidine 352, and histidine 477.

It belongs to the class-II aminoacyl-tRNA synthetase family. In terms of assembly, homodimer. Zn(2+) serves as cofactor.

It localises to the cytoplasm. It carries out the reaction tRNA(Thr) + L-threonine + ATP = L-threonyl-tRNA(Thr) + AMP + diphosphate + H(+). Functionally, catalyzes the attachment of threonine to tRNA(Thr) in a two-step reaction: L-threonine is first activated by ATP to form Thr-AMP and then transferred to the acceptor end of tRNA(Thr). Also edits incorrectly charged L-seryl-tRNA(Thr). This chain is Threonine--tRNA ligase, found in Helicobacter hepaticus (strain ATCC 51449 / 3B1).